A 109-amino-acid polypeptide reads, in one-letter code: Small ribosomal subunit protein bS6 (109 aa).

Belongs to the bacterial ribosomal protein bS6 family.

Binds together with bS18 to 16S ribosomal RNA. This chain is Small ribosomal subunit protein bS6, found in Anaplasma marginale (strain St. Maries).